A 157-amino-acid chain; its full sequence is Iron-sulfur cluster repair protein DnrN (157 aa).

The protein belongs to the RIC family.

Its subcellular location is the cytoplasm. Its function is as follows. Di-iron-containing protein involved in the repair of iron-sulfur clusters damaged by oxidative and nitrosative stress conditions. Required to repair damage caused by nitric oxide to FNR and NsrR transcription factors. The protein is Iron-sulfur cluster repair protein DnrN (dnrN) of Neisseria gonorrhoeae.